We begin with the raw amino-acid sequence, 99 residues long: Large ribosomal subunit protein uL23 (99 aa).

Belongs to the universal ribosomal protein uL23 family. In terms of assembly, part of the 50S ribosomal subunit. Contacts protein L29, and trigger factor when it is bound to the ribosome.

In terms of biological role, one of the early assembly proteins it binds 23S rRNA. One of the proteins that surrounds the polypeptide exit tunnel on the outside of the ribosome. Forms the main docking site for trigger factor binding to the ribosome. The polypeptide is Large ribosomal subunit protein uL23 (Rhodopseudomonas palustris (strain HaA2)).